Consider the following 991-residue polypeptide: Adhesion G-protein coupled receptor F3 (991 aa).

A signal peptide spans 1 to 20 (MSSLALSQLLLAVTLPLLEL). At 21 to 694 (EPTFVPTAQS…ENPTLDLLSQ (674 aa)) the chain is on the extracellular side. 10 N-linked (GlcNAc...) asparagine glycosylation sites follow: Asn75, Asn102, Asn118, Asn321, Asn362, Asn484, Asn571, Asn589, Asn630, and Asn660. The GAIN-B domain occupies 519-684 (HPFSFSSANV…SILMSQHTVP (166 aa)). 2 cysteine pairs are disulfide-bonded: Cys635–Cys666 and Cys654–Cys668. The GPS stretch occupies residues 635 to 684 (CVFWDHRVFQGQGGWSDEGCEVHAANASITQCICQHLTAFSILMSQHTVP). A helical transmembrane segment spans residues 695 to 715 (VGTGASVLALLVCLAIYGLVW). Over 716-730 (RVVVRNKVAFFRHTT) the chain is Cytoplasmic. Residues 731-751 (LFNMVICLLVADTCFLGSPFL) traverse the membrane as a helical segment. Residues 752 to 757 (PSGYHS) are Extracellular-facing. The helical transmembrane segment at 758–778 (LICLVTAFLCHFFYLATFFWM) threads the bilayer. Topologically, residues 779–799 (LAQALVLAHQLLFVFHQLSKH) are cytoplasmic. A helical transmembrane segment spans residues 800-820 (VVLSLMVMLGYLCPLGFAGVT). The Extracellular segment spans residues 821–850 (LGLYLPQRKYLWEGKCFLNGGGVMLYSFSE). The chain crosses the membrane as a helical span at residues 851 to 871 (PVLAIVGVNGLVLVIAVLKLL). Topologically, residues 872–892 (RPSLSEGPTVEKRQALVGVLK) are cytoplasmic. The chain crosses the membrane as a helical span at residues 893–913 (ALLILTPIFGLTWGLGVATLF). Residues 914–916 (DGS) lie on the Extracellular side of the membrane. Residues 917 to 937 (IVSHYAFSILNSLQGVFILVF) form a helical membrane-spanning segment. Residues 938 to 991 (GCLTDKKVLEALRKRLRGSRSSNSAISMVTNETYTSEHSKERSEPASYEERMTD) are Cytoplasmic-facing. Positions 964-991 (SMVTNETYTSEHSKERSEPASYEERMTD) are disordered. Residues 972–991 (TSEHSKERSEPASYEERMTD) are compositionally biased toward basic and acidic residues.

Belongs to the G-protein coupled receptor 2 family. Adhesion G-protein coupled receptor (ADGR) subfamily. In terms of assembly, heterodimer of 2 chains generated by proteolytic processing; the large extracellular N-terminal fragment and the membrane-bound C-terminal fragment predominantly remain associated and non-covalently linked. In terms of processing, autoproteolytically processed at the GPS region of the GAIN-B domain; this cleavage modulates receptor activity. As to expression, expression is restricted to testis and circumvallate papillae.

The protein localises to the membrane. Its function is as follows. Orphan receptor. The sequence is that of Adhesion G-protein coupled receptor F3 (ADGRF3) from Mus musculus (Mouse).